The sequence spans 250 residues: Cytochrome c oxidase subunit 2 (250 aa).

Over Met-1–Thr-27 the chain is Mitochondrial intermembrane. The chain crosses the membrane as a helical span at residues Pro-28–Asn-61. Residues Tyr-62–Gly-77 are Mitochondrial matrix-facing. Residues Thr-78 to Asp-107 traverse the membrane as a helical segment. The Mitochondrial intermembrane segment spans residues Glu-108–Gln-250. The Cu cation site is built by His-185, Cys-220, Glu-222, Cys-224, His-228, and Met-231. Glu-222 contacts Mg(2+).

It belongs to the cytochrome c oxidase subunit 2 family. As to quaternary structure, component of the cytochrome c oxidase (complex IV, CIV), a multisubunit enzyme composed of 11 subunits. The complex is composed of a catalytic core of 3 subunits Cox1, Cox2 and Cox3, encoded in the mitochondrial DNA, and 8 supernumerary subunits Cox4, Cox5a/Cox5, Cox6, Cox7, Cox8, Cox7a/Cox9, Cox6b/Cox12 and Cox6a/Cox13, which are encoded in the nuclear genome. The complex exists as a monomer or a dimer and forms respiratory supercomplexes (SCs) in the inner mitochondrial membrane with NADH-ubiquinone oxidoreductase (complex I, CI) and ubiquinol-cytochrome c oxidoreductase (cytochrome b-c1 complex, complex III, CIII), resulting in various different assemblies (supercomplexes I(1)IV(1), I(1)III(3)IV(2), III(2)IV(1) and III(2)IV(2) as well as larger supercomplexes of compositions like I(1)III(2)IV(5-6)). The cofactor is Cu cation.

Its subcellular location is the mitochondrion inner membrane. It carries out the reaction 4 Fe(II)-[cytochrome c] + O2 + 8 H(+)(in) = 4 Fe(III)-[cytochrome c] + 2 H2O + 4 H(+)(out). Functionally, component of the cytochrome c oxidase, the last enzyme in the mitochondrial electron transport chain which drives oxidative phosphorylation. The respiratory chain contains 3 multisubunit complexes succinate dehydrogenase (complex II, CII), ubiquinol-cytochrome c oxidoreductase (cytochrome b-c1 complex, complex III, CIII) and cytochrome c oxidase (complex IV, CIV), that cooperate to transfer electrons derived from NADH and succinate to molecular oxygen, creating an electrochemical gradient over the inner membrane that drives transmembrane transport and the ATP synthase. Cytochrome c oxidase is the component of the respiratory chain that catalyzes the reduction of oxygen to water. Electrons originating from reduced cytochrome c in the intermembrane space (IMS) are transferred via the dinuclear copper A center (CU(A)) of Cox2 and heme A of Cox1 to the active site in Cox1, a binuclear center (BNC) formed by heme A3 and copper B (CU(B)). The BNC reduces molecular oxygen to 2 water molecules using 4 electrons from cytochrome c in the IMS and 4 protons from the mitochondrial matrix. The polypeptide is Cytochrome c oxidase subunit 2 (cox-2) (Neurospora crassa (strain ATCC 24698 / 74-OR23-1A / CBS 708.71 / DSM 1257 / FGSC 987)).